The primary structure comprises 429 residues: Bifunctional protein GlmU (429 aa).

Positions 1-223 are pyrophosphorylase; the sequence is MKTSILILAA…EDEFMGINDK (223 aa). Residues 8-11, lysine 22, and 81-82 contribute to the UDP-N-acetyl-alpha-D-glucosamine site; these read LAAG and GT. Aspartate 102 provides a ligand contact to Mg(2+). Positions 135, 149, 164, and 221 each coordinate UDP-N-acetyl-alpha-D-glucosamine. Residue asparagine 221 participates in Mg(2+) binding. The linker stretch occupies residues 224–244; that stretch reads FELSIAENFMQEKIKKYWMQQ. Residues 245 to 429 form an N-acetyltransferase region; sequence GVIFHLPQST…KDYYYKKFQK (185 aa). UDP-N-acetyl-alpha-D-glucosamine is bound by residues arginine 308 and lysine 325. Histidine 336 functions as the Proton acceptor in the catalytic mechanism. Residues tyrosine 339 and asparagine 350 each coordinate UDP-N-acetyl-alpha-D-glucosamine. Residues 359–360, serine 378, alanine 396, and arginine 413 each bind acetyl-CoA; that span reads NY.

This sequence in the N-terminal section; belongs to the N-acetylglucosamine-1-phosphate uridyltransferase family. The protein in the C-terminal section; belongs to the transferase hexapeptide repeat family. In terms of assembly, homotrimer. Mg(2+) serves as cofactor.

It is found in the cytoplasm. It catalyses the reaction alpha-D-glucosamine 1-phosphate + acetyl-CoA = N-acetyl-alpha-D-glucosamine 1-phosphate + CoA + H(+). The enzyme catalyses N-acetyl-alpha-D-glucosamine 1-phosphate + UTP + H(+) = UDP-N-acetyl-alpha-D-glucosamine + diphosphate. The protein operates within nucleotide-sugar biosynthesis; UDP-N-acetyl-alpha-D-glucosamine biosynthesis; N-acetyl-alpha-D-glucosamine 1-phosphate from alpha-D-glucosamine 6-phosphate (route II): step 2/2. It functions in the pathway nucleotide-sugar biosynthesis; UDP-N-acetyl-alpha-D-glucosamine biosynthesis; UDP-N-acetyl-alpha-D-glucosamine from N-acetyl-alpha-D-glucosamine 1-phosphate: step 1/1. Its pathway is bacterial outer membrane biogenesis; LPS lipid A biosynthesis. Its function is as follows. Catalyzes the last two sequential reactions in the de novo biosynthetic pathway for UDP-N-acetylglucosamine (UDP-GlcNAc). The C-terminal domain catalyzes the transfer of acetyl group from acetyl coenzyme A to glucosamine-1-phosphate (GlcN-1-P) to produce N-acetylglucosamine-1-phosphate (GlcNAc-1-P), which is converted into UDP-GlcNAc by the transfer of uridine 5-monophosphate (from uridine 5-triphosphate), a reaction catalyzed by the N-terminal domain. The chain is Bifunctional protein GlmU from Campylobacter jejuni subsp. jejuni serotype O:6 (strain 81116 / NCTC 11828).